The following is a 715-amino-acid chain: Methionine--tRNA ligase (715 aa).

The short motif at 20–30 (PYANGKAHIGH) is the 'HIGH' region element. Positions 151, 154, 163, and 167 each coordinate Zn(2+). Positions 334-338 (KFSKT) match the 'KMSKS' region motif. ATP is bound at residue Lys337. The tract at residues 559-593 (ANAKRNGVKGGEKEPSKSEGMGPSEASKASEKTVD) is disordered. One can recognise a tRNA-binding domain in the interval 613 to 715 (DFAKLDIRVG…KEIKSGSRIR (103 aa)).

The protein belongs to the class-I aminoacyl-tRNA synthetase family. MetG type 1 subfamily. Homodimer. It depends on Zn(2+) as a cofactor.

The protein resides in the cytoplasm. It catalyses the reaction tRNA(Met) + L-methionine + ATP = L-methionyl-tRNA(Met) + AMP + diphosphate. Its function is as follows. Is required not only for elongation of protein synthesis but also for the initiation of all mRNA translation through initiator tRNA(fMet) aminoacylation. In Methanosarcina mazei (strain ATCC BAA-159 / DSM 3647 / Goe1 / Go1 / JCM 11833 / OCM 88) (Methanosarcina frisia), this protein is Methionine--tRNA ligase.